We begin with the raw amino-acid sequence, 2242 residues long: MNNNNKKGVYILWVHDQQFSKEELVVNPEYFPKLKIMDVLKIYSPSNPSKRLCLRVKQLSPLKTKLQISISKYVAGVFDFALRKEVVVNIIPEKQAIIDFVELSFKDQYIGRSDMWRLKLNLQNECVYVLKKLAFAQIRAQVEEMVSNGQKVSSGLIDDSTKFVFRSRSAKFVLFIQMSKEMWDYSPDGELYFEKAVNGFLKNLFQRWKSLSVNHTITIILFSRTFHENDDILDEIPNIPRNPQGKLYQDFYKVVVNEETRPDWSSIIVNLKREFNDYHTSVNWDIYGRNSALGKNSTASQGNFLEAINLGMSYFDKHYIDRDFTRTGQMIVVISAGTGIFEVDPDINLITKQRMIDNGIGCDLICLNNHPLHVVPLFKFTISNQNKSQNTIQNNNNNNNNNNNNNNNNNNNNNNNNNNNNNNNNNNNNNSNNNKNNQNNGKAISNIGRNNNNSNSGSSGNSNNSSGGQLYNFPYWLAISFYDENNTTTTTTDVTTNDKRNGLFVPQFKIPEKVNSFYYEDDEKPVYDFYIPKDPRNLPAFATPKINHKYTSNSLGVNSYEDTIFNMPNGGGILDDSNALGGNNNNNYNNNNGNGNGHNHNNHNNNNNNNNNNDHGGHSDTEPSDFSDTEDNSSTTPNSQYSRVAIGLNDKKRATFQIGGTRSSSSFENQRTIINSTTSNNNNNNSNNVVNKRYTSTQHQPILRNGGTINNNNNNQQNHPISPSNSFDQKTIPYHNQLLSTIPPQLFGKKKKEINPFTYDSTPFHLTSNRRRWSHLWFSPNTYIFGKTNTNPNPFLPNWKSLCEPASLPITTDYFPSTKDLKAKYREYVHNLTLPDDNEYTNSFEALLKELISQRLAQGYQLIMITNSEIDPTTTTTTGGTTTPATTTPATTTPATTATSTTPTTIITPTTNPSTATSAIATPSMATPSSSTTTTTTTANLSTSPPNSSNTVPNSGGSGKGTKKSYQLSLGHDFHSITYDPSNLSIQVKRYQRYNGRNSSGSKKLRYHYFLNTIHLQGFLHNSIELQHTASSEYPWNSLDNLICGQLAMSGFGPRIKYWRVLYAIIPTVENNQHQQQLQLEQQEKEKEKARLAALEKKKPFPREDSFSTLILPTNSSSSSSSSSSLPSTVSTTNTNTNNNNNNNNNNNNNNINTTVPTNVPTTTTTDDSTVKNTSTTTATTATEDHGLNTAFNSSSIPIPSKLASPLQSPNLSPKASSVSTSMAALSSSTLVSSNANTTTTNNPVLTTTTTTTTTTAVLNSNGTPLVNSNSSSNSNFAQNSISMLNGSQQQQQLIGSQSAPTSPLTPHKNINTNNNNNNNTTTNTTNNNNSVMNGSAGIINSSSGLNGIKSPPLPILPSSNSLLSSNVSPSNNITPLNSITNSSELLPSSSGASSSSSNTLSSSNSGENNALPEHTEEERLIAFNKFKEFINSQINRNQLAANSNAQSSLLNSSTNNANSNNSSNSTNTSGTVIQQKLDIKTILFSSIETFDPSTIVSNEKSNNNTYTNNNNNNNSINSLNYNSVPSQEQIDLFKEKLYSSNLSGIFYRLNMPYPIGIKMTERKYGIRRTSYKKCFIGAECIDWMLQNIEITKREEALIICQKMMDQKLIKQVEKSTFVDGQFYYRLKEDDLFISSPIIKTINNTNNNFNNNNTNSNNNQQQQQQQQSIPSVTSSAVNSPNKDSNTPDHSPISSPKQIGNKLSSSSNNTPSTFLNSSTNNTNQSTNTTSSSSSTTNINTTLNTNNTLSSSTPPITSIQSSMSNSTKSVVPISSLSSLINNPSLRQSNTDYLTNKEKDKEKEIDEANGDNNNNNNNNNNNNNNNNNNNNNNNNNNNSSNNGENDSSSNSGQGSLNSTLSSIPPATTPNTNPLHFSGGISYGSSVQNSNQHQQQQPQQPQQQQQQQQQQQQQPNNLIDYYENPNKISEAKIEMDLSKTDRFEWILMKYDKTFCPTRYFHVEFNWIVSTGCVVDDFINSCVRKAKQFGLTLIQIPMEKNYSPFSLPTHVHLDQQLMSPQVLKHIFTKFGLIPDTIRKRASSLVTRQDLYIFNDSDVQYSEYVHRTGLLFVRVVEDGFLCYINNAPSNRPFLPAATMCLESFQNLCNQLNNSLSFIGNGSLNSNNNYNNNNNNNNNNNGGGNGNPNLLKPIDRQEANFLSLLALGYKQNSDTEEKNNESDSDNNHNQDTCDNSDNDTDHLSESHEGSHKNESDKEGRDKNEMWESQSEVVYYSVMSRSPLLGSFNE.

Disordered stretches follow at residues 388–465, 576–644, 701–730, 871–965, 1077–1194, 1287–1336, 1384–1414, 1446–1471, and 1502–1521; these read SQNT…SNNS, DSNA…YSRV, PILRNGGTINNNNNNQQNHPISPSNSFDQK, DPTT…TKKS, QLQL…AFNS, GSQQ…MNGS, SELLPSSSGASSSSSNTLSSSNSGENNALPE, AQSSLLNSSTNNANSNNSSNSTNTSG, and SNNNTYTNNNNNNNSINSLN. The stretch at 392–440 forms a coiled coil; that stretch reads IQNNNNNNNNNNNNNNNNNNNNNNNNNNNNNNNNNNNNNSNNNKNNQNN. Low complexity predominate over residues 581–614; the sequence is GGNNNNNYNNNNGNGNGHNHNNHNNNNNNNNNND. Positions 622 to 631 are enriched in acidic residues; that stretch reads EPSDFSDTED. Composition is skewed to polar residues over residues 632 to 642 and 719 to 729; these read NSSTTPNSQYS and HPISPSNSFDQ. The segment covering 872 to 955 has biased composition (low complexity); the sequence is PTTTTTTGGT…PNSSNTVPNS (84 aa). Positions 1066-1101 form a coiled coil; sequence IPTVENNQHQQQLQLEQQEKEKEKARLAALEKKKPF. Over residues 1082-1106 the composition is skewed to basic and acidic residues; that stretch reads QQEKEKEKARLAALEKKKPFPREDS. Composition is skewed to low complexity over residues 1108-1182 and 1287-1299; these read STLI…ATTA and GSQQQQQLIGSQS. Residues 1300 to 1311 are compositionally biased toward polar residues; that stretch reads APTSPLTPHKNI. 3 stretches are compositionally biased toward low complexity: residues 1312–1336, 1384–1410, and 1446–1470; these read NTNNNNNNNTTTNTTNNNNSVMNGS, SELLPSSSGASSSSSNTLSSSNSGENN, and AQSSLLNSSTNNANSNNSSNSTNTS. A DEP domain is found at 1556–1629; sequence IGIKMTERKY…DGQFYYRLKE (74 aa). Low complexity predominate over residues 1645-1668; sequence TNNNFNNNNTNSNNNQQQQQQQQS. 4 disordered regions span residues 1645–1763, 1803–1910, 2122–2145, and 2165–2218; these read TNNN…SMSN, DEAN…QQQQ, NYNNNNNNNNNNNGGGNGNPNLLK, and NSDT…KNEM. The segment covering 1669–1702 has biased composition (polar residues); the sequence is IPSVTSSAVNSPNKDSNTPDHSPISSPKQIGNKL. Composition is skewed to low complexity over residues 1703-1760 and 1807-1848; these read SSSS…IQSS and GDNN…SSNS. Positions 1791–1821 form a coiled coil; the sequence is LTNKEKDKEKEIDEANGDNNNNNNNNNNNNN. 2 stretches are compositionally biased toward polar residues: residues 1849 to 1871 and 1879 to 1889; these read GQGSLNSTLSSIPPATTPNTNPL and YGSSVQNSNQH. 2 stretches are compositionally biased toward low complexity: residues 1890 to 1910 and 2122 to 2133; these read QQQQPQQPQQQQQQQQQQQQQ and NYNNNNNNNNNN. 2 stretches are compositionally biased toward basic and acidic residues: residues 2166–2181 and 2192–2218; these read SDTEEKNNESDSDNNH and DTDHLSESHEGSHKNESDKEGRDKNEM.

The protein in the N-terminal section; belongs to the IML1 family.

The chain is DEP domain-containing protein DDB_G0279099 from Dictyostelium discoideum (Social amoeba).